The primary structure comprises 305 residues: Aspartate carbamoyltransferase catalytic subunit (305 aa).

Arg-54 and Thr-55 together coordinate carbamoyl phosphate. An L-aspartate-binding site is contributed by Lys-83. Carbamoyl phosphate contacts are provided by Arg-104, His-132, and Gln-135. L-aspartate is bound by residues Arg-165 and Arg-226. Carbamoyl phosphate contacts are provided by Leu-265 and Pro-266.

This sequence belongs to the aspartate/ornithine carbamoyltransferase superfamily. ATCase family. In terms of assembly, heterooligomer of catalytic and regulatory chains.

It catalyses the reaction carbamoyl phosphate + L-aspartate = N-carbamoyl-L-aspartate + phosphate + H(+). It participates in pyrimidine metabolism; UMP biosynthesis via de novo pathway; (S)-dihydroorotate from bicarbonate: step 2/3. Functionally, catalyzes the condensation of carbamoyl phosphate and aspartate to form carbamoyl aspartate and inorganic phosphate, the committed step in the de novo pyrimidine nucleotide biosynthesis pathway. The chain is Aspartate carbamoyltransferase catalytic subunit from Pyrobaculum arsenaticum (strain DSM 13514 / JCM 11321 / PZ6).